The sequence spans 280 residues: Hemin import ATP-binding protein HmuV (280 aa).

In terms of domain architecture, ABC transporter spans 26–260 (LAAAGGLRVH…GLLSEVYDQP (235 aa)). Residue 59 to 66 (GPNGAGKS) coordinates ATP.

The protein belongs to the ABC transporter superfamily. Heme (hemin) importer (TC 3.A.1.14.5) family. The complex is composed of two ATP-binding proteins (HmuV), two transmembrane proteins (HmuU) and a solute-binding protein (HmuT).

The protein localises to the cell membrane. In terms of biological role, part of the ABC transporter complex HmuTUV involved in hemin import. Responsible for energy coupling to the transport system. The protein is Hemin import ATP-binding protein HmuV of Streptomyces coelicolor (strain ATCC BAA-471 / A3(2) / M145).